Here is a 201-residue protein sequence, read N- to C-terminus: Probable chemoreceptor glutamine deamidase CheD (201 aa).

Belongs to the CheD family.

It catalyses the reaction L-glutaminyl-[protein] + H2O = L-glutamyl-[protein] + NH4(+). Its function is as follows. Probably deamidates glutamine residues to glutamate on methyl-accepting chemotaxis receptors (MCPs), playing an important role in chemotaxis. In Chlorobium luteolum (strain DSM 273 / BCRC 81028 / 2530) (Pelodictyon luteolum), this protein is Probable chemoreceptor glutamine deamidase CheD.